The sequence spans 231 residues: Superoxide dismutase [Mn], mitochondrial (231 aa).

Residues 1–27 constitute a mitochondrion transit peptide; the sequence is MALRTLASRKTLAAAALPLAAAAAARG. Mn(2+)-binding residues include His-55, His-103, Asp-192, and His-196.

It belongs to the iron/manganese superoxide dismutase family. As to quaternary structure, homotetramer. Mn(2+) serves as cofactor.

It is found in the mitochondrion matrix. It carries out the reaction 2 superoxide + 2 H(+) = H2O2 + O2. In terms of biological role, destroys superoxide anion radicals which are normally produced within the cells and which are toxic to biological systems. The sequence is that of Superoxide dismutase [Mn], mitochondrial (SODA) from Oryza sativa subsp. japonica (Rice).